The chain runs to 120 residues: Large ribosomal subunit protein eL8 (120 aa).

The protein belongs to the eukaryotic ribosomal protein eL8 family. Part of the 50S ribosomal subunit. Probably part of the RNase P complex.

It localises to the cytoplasm. Multifunctional RNA-binding protein that recognizes the K-turn motif in ribosomal RNA, the RNA component of RNase P, box H/ACA, box C/D and box C'/D' sRNAs. This Natronomonas pharaonis (strain ATCC 35678 / DSM 2160 / CIP 103997 / JCM 8858 / NBRC 14720 / NCIMB 2260 / Gabara) (Halobacterium pharaonis) protein is Large ribosomal subunit protein eL8.